A 529-amino-acid chain; its full sequence is GMP synthase [glutamine-hydrolyzing] (529 aa).

One can recognise a Glutamine amidotransferase type-1 domain in the interval 16–205; it reads PVLVVDFGAQ…LHDFAGLDAD (190 aa). Cys-93 acts as the Nucleophile in catalysis. Catalysis depends on residues His-179 and Glu-181. Positions 206–403 constitute a GMPS ATP-PPase domain; that stretch reads WTAANIAGVL…LDLPEEIVAR (198 aa). An ATP-binding site is contributed by 233–239; the sequence is SGGVDSA.

In terms of assembly, homodimer.

The enzyme catalyses XMP + L-glutamine + ATP + H2O = GMP + L-glutamate + AMP + diphosphate + 2 H(+). Its pathway is purine metabolism; GMP biosynthesis; GMP from XMP (L-Gln route): step 1/1. Functionally, catalyzes the synthesis of GMP from XMP. This is GMP synthase [glutamine-hydrolyzing] from Mycobacterium leprae (strain Br4923).